Reading from the N-terminus, the 305-residue chain is Glycine--tRNA ligase alpha subunit (305 aa).

This sequence belongs to the class-II aminoacyl-tRNA synthetase family. As to quaternary structure, tetramer of two alpha and two beta subunits.

The protein localises to the cytoplasm. It catalyses the reaction tRNA(Gly) + glycine + ATP = glycyl-tRNA(Gly) + AMP + diphosphate. This Vibrio cholerae serotype O1 (strain ATCC 39315 / El Tor Inaba N16961) protein is Glycine--tRNA ligase alpha subunit (glyQ).